Reading from the N-terminus, the 544-residue chain is Glycoprotein gp100 (544 aa).

Positions 1–19 (MKNFILLVFLFLLVSNSLG) are cleaved as a signal peptide. Over 20-489 (KSNKKDDQSP…SGGGGNKKLY (470 aa)) the chain is Extracellular. Asn-80 is a glycosylation site (N-linked (GlcNAc...) asparagine). The span at 84-99 (EPQNNPIPTVSINPDQ) shows a compositional bias: polar residues. The disordered stretch occupies residues 84–215 (EPQNNPIPTV…TPTRPSSSVS (132 aa)). Low complexity-rich tracts occupy residues 126-142 (SKPTSTPTSTPSQTIPP), 150-165 (PQTTSPTSKPTSTPTP), and 189-199 (PKPTKSSKPTK). N-linked (GlcNAc...) asparagine glycans are attached at residues Asn-224, Asn-308, Asn-332, Asn-366, Asn-380, Asn-410, Asn-422, and Asn-478. Residues 444–480 (KPSTTDDDNNKNNDDGDSEIDSVGKSAVDSSKSNNNS) are disordered. The helical transmembrane segment at 490–510 (LLIILPTVLFIIVAALVAIFI) threads the bilayer. The Cytoplasmic segment spans residues 511–544 (KTRVSQNSGSKVNKNNNKKDSINVPFQMLDEITT).

N- and O-glycosylated.

It localises to the membrane. The chain is Glycoprotein gp100 (gppA) from Dictyostelium discoideum (Social amoeba).